The chain runs to 265 residues: Neuronal membrane glycoprotein M6-b (265 aa).

Residues 31-51 (GGVPYASLVATILCFSGVALF) form a helical membrane-spanning segment. Asparagine 73 carries N-linked (GlcNAc...) asparagine glycosylation. 2 helical membrane passes run 90–110 (VIYG…AEGF) and 136–156 (FVFL…FSAV). The N-linked (GlcNAc...) asparagine glycan is linked to asparagine 177. The chain crosses the membrane as a helical span at residues 224 to 244 (LFIVACAGAGATVIALLIYMM). The residue at position 257 (serine 257) is a Phosphoserine.

It belongs to the myelin proteolipid protein family. As to quaternary structure, interacts with SERT.

The protein resides in the membrane. Its subcellular location is the cell membrane. May be involved in neural development. Involved in regulation of osteoblast function and bone formation. Involved in matrix vesicle release by osteoblasts; this function seems to involve maintenance of the actin cytoskeleton. May be involved in cellular trafficking of SERT and thereby in regulation of serotonin uptake. The protein is Neuronal membrane glycoprotein M6-b (GPM6B) of Pongo abelii (Sumatran orangutan).